The chain runs to 239 residues: Protein GrpE (239 aa).

Disordered regions lie at residues 1–56 (MIEN…KNTI) and 208–239 (SMGP…SEDV). A compositionally biased stretch (basic and acidic residues) spans 40–53 (TSQKKEAINTEELK). Positions 224-239 (TVEEDVNSEVNTSEDV) are enriched in acidic residues.

This sequence belongs to the GrpE family. Homodimer.

It localises to the cytoplasm. In terms of biological role, participates actively in the response to hyperosmotic and heat shock by preventing the aggregation of stress-denatured proteins, in association with DnaK and GrpE. It is the nucleotide exchange factor for DnaK and may function as a thermosensor. Unfolded proteins bind initially to DnaJ; upon interaction with the DnaJ-bound protein, DnaK hydrolyzes its bound ATP, resulting in the formation of a stable complex. GrpE releases ADP from DnaK; ATP binding to DnaK triggers the release of the substrate protein, thus completing the reaction cycle. Several rounds of ATP-dependent interactions between DnaJ, DnaK and GrpE are required for fully efficient folding. This Prochlorococcus marinus (strain MIT 9215) protein is Protein GrpE.